Reading from the N-terminus, the 198-residue chain is MQVTIECQKRPEGSKPNTLRRQGLIPAALYGHKGTESISLIIKEKDAQLLLKKASVNNTLVDVNIPDVPWSGKALIREVQTHPWKRFVYHLSFFSVAAHGKIDVVVPLNLVGESSGVKQGGIIEQVITEISVQCLPESIPETIEIDISPLKIGDSISVGDLQLSEGVTYLDDPTQTILTVMAPKKGSATEEETAEASA.

The protein belongs to the bacterial ribosomal protein bL25 family. CTC subfamily. In terms of assembly, part of the 50S ribosomal subunit; part of the 5S rRNA/L5/L18/L25 subcomplex. Contacts the 5S rRNA. Binds to the 5S rRNA independently of L5 and L18.

Functionally, this is one of the proteins that binds to the 5S RNA in the ribosome where it forms part of the central protuberance. This chain is Large ribosomal subunit protein bL25, found in Gloeothece citriformis (strain PCC 7424) (Cyanothece sp. (strain PCC 7424)).